A 155-amino-acid polypeptide reads, in one-letter code: 6,7-dimethyl-8-ribityllumazine synthase (155 aa).

5-amino-6-(D-ribitylamino)uracil is bound by residues Phe24, 58-60 (AFE), and 82-84 (VII). 87–88 (ST) contacts (2S)-2-hydroxy-3-oxobutyl phosphate. The active-site Proton donor is the His90. Phe115 serves as a coordination point for 5-amino-6-(D-ribitylamino)uracil. Residue Arg129 participates in (2S)-2-hydroxy-3-oxobutyl phosphate binding.

The protein belongs to the DMRL synthase family.

It carries out the reaction (2S)-2-hydroxy-3-oxobutyl phosphate + 5-amino-6-(D-ribitylamino)uracil = 6,7-dimethyl-8-(1-D-ribityl)lumazine + phosphate + 2 H2O + H(+). It participates in cofactor biosynthesis; riboflavin biosynthesis; riboflavin from 2-hydroxy-3-oxobutyl phosphate and 5-amino-6-(D-ribitylamino)uracil: step 1/2. Functionally, catalyzes the formation of 6,7-dimethyl-8-ribityllumazine by condensation of 5-amino-6-(D-ribitylamino)uracil with 3,4-dihydroxy-2-butanone 4-phosphate. This is the penultimate step in the biosynthesis of riboflavin. This is 6,7-dimethyl-8-ribityllumazine synthase from Chlorobium limicola (strain DSM 245 / NBRC 103803 / 6330).